Consider the following 336-residue polypeptide: MFYQIMRSFLFMLNPEKAHDFSIKQLKLTQGTALDFIYRQRVQQRPVQVMGLTFPNSVGLAAGLDKNGECIDAFGAMGFGHIEVGTVTPVAQPGNESPRMFRVLESDGIINRMGFNNEGVENLIKNVKESNFKGVIGINIGKNFSTPVEQGKEDYLLCMDKVYPYADYIAVNISSPNTPGLRSLQYGDALNELLAALKIRQAELQVKYNKYVPIALKIAPDLSDQEIVSIAKSLLEYKIDGLIATNTTLDRDMVKGMSHAGEAGGLSGRPLQNKSTAVIAKFAAQLKGEIPIIGVGGIDNVIAAKEKIQAGASLVQIYSGFIYHGPQLVKNIVNNI.

Residues Ala62–Lys66 and Thr86 each bind FMN. A substrate-binding site is contributed by Lys66. Position 111-115 (Asn111–Phe115) interacts with substrate. FMN-binding residues include Asn139 and Asn172. Asn172 provides a ligand contact to substrate. Ser175 acts as the Nucleophile in catalysis. Position 177 (Asn177) interacts with substrate. FMN-binding residues include Lys217 and Thr245. Asn246–Thr247 contacts substrate. Residues Gly268, Gly297, and Tyr318 to Ser319 contribute to the FMN site.

Belongs to the dihydroorotate dehydrogenase family. Type 2 subfamily. Monomer. Requires FMN as cofactor.

It is found in the cell membrane. It carries out the reaction (S)-dihydroorotate + a quinone = orotate + a quinol. The protein operates within pyrimidine metabolism; UMP biosynthesis via de novo pathway; orotate from (S)-dihydroorotate (quinone route): step 1/1. Functionally, catalyzes the conversion of dihydroorotate to orotate with quinone as electron acceptor. This is Dihydroorotate dehydrogenase (quinone) from Psychromonas ingrahamii (strain DSM 17664 / CCUG 51855 / 37).